The following is a 204-amino-acid chain: Transcriptional regulator GfcR (204 aa).

It belongs to the purine/pyrimidine phosphoribosyltransferase family. GfcR subfamily.

In Methanosarcina mazei (strain ATCC BAA-159 / DSM 3647 / Goe1 / Go1 / JCM 11833 / OCM 88) (Methanosarcina frisia), this protein is Transcriptional regulator GfcR.